Consider the following 557-residue polypeptide: Potassium-transporting ATPase potassium-binding subunit (557 aa).

The next 12 membrane-spanning stretches (helical) occupy residues 5–25 (GFLL…PLGS), 63–83 (LCAI…MLLG), 132–152 (GLTV…FAFI), 170–190 (LLRI…LFLI), 253–273 (FVQM…FGEV), 283–303 (LLWA…WAEV), 329–349 (VLVS…AVIA), 356–376 (ALGG…FGGV), 379–399 (GLYG…LMIG), 416–436 (LTAL…ALAM), 484–504 (LLAF…MAIA), and 526–546 (LFVG…FIPA).

This sequence belongs to the KdpA family. In terms of assembly, the system is composed of three essential subunits: KdpA, KdpB and KdpC.

It localises to the cell inner membrane. Functionally, part of the high-affinity ATP-driven potassium transport (or Kdp) system, which catalyzes the hydrolysis of ATP coupled with the electrogenic transport of potassium into the cytoplasm. This subunit binds the periplasmic potassium ions and delivers the ions to the membrane domain of KdpB through an intramembrane tunnel. This chain is Potassium-transporting ATPase potassium-binding subunit, found in Shigella boydii serotype 18 (strain CDC 3083-94 / BS512).